The following is a 123-amino-acid chain: Defensin beta 118 (123 aa).

An N-terminal signal peptide occupies residues 1-19 (MKLLLLALPMLVLLPQVIP). Disulfide bonds link cysteine 27–cysteine 54, cysteine 34–cysteine 48, and cysteine 38–cysteine 55. 2 disordered regions span residues 59–79 (NEDH…STPG) and 102–123 (MVEE…HHSS). The propeptide occupies 64–123 (QVPTTSPTPLSDSTPGSIDDILTVRFTTDYFEVSSKKDMVEESEAGWGTQTSLPDVHHSS). Positions 66-79 (PTTSPTPLSDSTPG) are enriched in low complexity.

Belongs to the beta-defensin family. The three-dimensional structure formed by the three intramolecular disulfide bridges is indispensable for antimicrobial activity.

It localises to the secreted. Host defense peptide that exhibits antimicrobial activity against both Gram-negative bacteria, such as E.coli and S.typhimurium, and Gram-positive bacteria, such as S.aureus and B.subtilis. Inhibits cell adhesion of E.coli on intestinal epithelial enterocytes. Causes rapid permeabilization of both the outer and inner membrane of E.coli, leading to morphological alterations on the bacterial surface. Binds to bacterial lipopolysaccharides (LPS) with high affinity, and may thereby be involved in immunoregulation through LPS neutralization. May contribute to epididymal innate immunity and protect the sperm against attack by microorganisms. This is Defensin beta 118 (DEFB118) from Hylobates lar (Lar gibbon).